The primary structure comprises 148 residues: MARPTKFRRVEFFPEDDYFVPCGKPKCQIEEIALKVEELEAMRLKDIEELNQEECAEKMQVSRQTFQNIIDSARKKVVTALTEGKAIRISGGHYTTKLCKFKCAECETIYEINYDQDRAVCPSCGSDKVMCNKKAGFCKNWCKGNNIE.

It belongs to the UPF0251 family.

In Clostridium beijerinckii (strain ATCC 51743 / NCIMB 8052) (Clostridium acetobutylicum), this protein is UPF0251 protein Cbei_2962.